The primary structure comprises 112 residues: Ig kappa chain V-II region MOPC 167 (112 aa).

The interval 1-23 is framework-1; the sequence is DIVITQDELSNPVTSGESVSISC. C23 and C93 are joined by a disulfide. Residues 24–39 form a complementarity-determining-1 region; that stretch reads RSSKSLLYKDGKTYLN. The segment at 40–54 is framework-2; sequence WFLQRPGQSPQLLIS. Positions 55 to 61 are complementarity-determining-2; it reads LMSTRAS. The segment at 62-93 is framework-3; that stretch reads GVSDRFSGSGSRTDFTLEISRVKAEDVGVYYC. The tract at residues 94–102 is complementarity-determining-3; sequence QQLVEYPLT. Residues 103–112 are framework-4; sequence FGAGTKLELK.

In Mus musculus (Mouse), this protein is Ig kappa chain V-II region MOPC 167.